The primary structure comprises 188 residues: Ribosome-recycling factor (188 aa).

Belongs to the RRF family.

It localises to the cytoplasm. In terms of biological role, responsible for the release of ribosomes from messenger RNA at the termination of protein biosynthesis. May increase the efficiency of translation by recycling ribosomes from one round of translation to another. The sequence is that of Ribosome-recycling factor from Blochmanniella pennsylvanica (strain BPEN).